The primary structure comprises 363 residues: Anhydro-N-acetylmuramic acid kinase (363 aa).

10–17 (GTSLDGLD) serves as a coordination point for ATP.

The protein belongs to the anhydro-N-acetylmuramic acid kinase family.

It carries out the reaction 1,6-anhydro-N-acetyl-beta-muramate + ATP + H2O = N-acetyl-D-muramate 6-phosphate + ADP + H(+). The protein operates within amino-sugar metabolism; 1,6-anhydro-N-acetylmuramate degradation. It participates in cell wall biogenesis; peptidoglycan recycling. Catalyzes the specific phosphorylation of 1,6-anhydro-N-acetylmuramic acid (anhMurNAc) with the simultaneous cleavage of the 1,6-anhydro ring, generating MurNAc-6-P. Is required for the utilization of anhMurNAc either imported from the medium or derived from its own cell wall murein, and thus plays a role in cell wall recycling. The polypeptide is Anhydro-N-acetylmuramic acid kinase (Pseudomonas fluorescens (strain Pf0-1)).